Consider the following 725-residue polypeptide: Ribosomal RNA large subunit methyltransferase K/L (725 aa).

Positions 46–157 (VAYRLCLWSR…RGQATLSLDL (112 aa)) constitute a THUMP domain. The segment at 393-412 (TGERGERNDDGQARAPSEPA) is disordered. Residues 395 to 404 (ERGERNDDGQ) are compositionally biased toward basic and acidic residues.

It belongs to the methyltransferase superfamily. RlmKL family.

It localises to the cytoplasm. It carries out the reaction guanosine(2445) in 23S rRNA + S-adenosyl-L-methionine = N(2)-methylguanosine(2445) in 23S rRNA + S-adenosyl-L-homocysteine + H(+). The catalysed reaction is guanosine(2069) in 23S rRNA + S-adenosyl-L-methionine = N(2)-methylguanosine(2069) in 23S rRNA + S-adenosyl-L-homocysteine + H(+). Specifically methylates the guanine in position 2445 (m2G2445) and the guanine in position 2069 (m7G2069) of 23S rRNA. In Pseudomonas paraeruginosa (strain DSM 24068 / PA7) (Pseudomonas aeruginosa (strain PA7)), this protein is Ribosomal RNA large subunit methyltransferase K/L.